Consider the following 320-residue polypeptide: Lipoyl synthase (320 aa).

C66, C71, C77, C92, C96, C99, and S306 together coordinate [4Fe-4S] cluster. Residues 77 to 295 form the Radical SAM core domain; that stretch reads CFGHGTATFM…AEIGYAMGFS (219 aa).

It belongs to the radical SAM superfamily. Lipoyl synthase family. [4Fe-4S] cluster serves as cofactor.

Its subcellular location is the cytoplasm. It carries out the reaction [[Fe-S] cluster scaffold protein carrying a second [4Fe-4S](2+) cluster] + N(6)-octanoyl-L-lysyl-[protein] + 2 oxidized [2Fe-2S]-[ferredoxin] + 2 S-adenosyl-L-methionine + 4 H(+) = [[Fe-S] cluster scaffold protein] + N(6)-[(R)-dihydrolipoyl]-L-lysyl-[protein] + 4 Fe(3+) + 2 hydrogen sulfide + 2 5'-deoxyadenosine + 2 L-methionine + 2 reduced [2Fe-2S]-[ferredoxin]. The protein operates within protein modification; protein lipoylation via endogenous pathway; protein N(6)-(lipoyl)lysine from octanoyl-[acyl-carrier-protein]: step 2/2. Functionally, catalyzes the radical-mediated insertion of two sulfur atoms into the C-6 and C-8 positions of the octanoyl moiety bound to the lipoyl domains of lipoate-dependent enzymes, thereby converting the octanoylated domains into lipoylated derivatives. This is Lipoyl synthase from Thioalkalivibrio sulfidiphilus (strain HL-EbGR7).